The following is a 172-amino-acid chain: Translation initiation factor IF-3 (172 aa).

The protein belongs to the IF-3 family. Monomer.

It is found in the cytoplasm. Functionally, IF-3 binds to the 30S ribosomal subunit and shifts the equilibrium between 70S ribosomes and their 50S and 30S subunits in favor of the free subunits, thus enhancing the availability of 30S subunits on which protein synthesis initiation begins. The polypeptide is Translation initiation factor IF-3 (Haemophilus influenzae (strain ATCC 51907 / DSM 11121 / KW20 / Rd)).